The sequence spans 180 residues: ATP synthase subunit delta (180 aa).

Belongs to the ATPase delta chain family. F-type ATPases have 2 components, F(1) - the catalytic core - and F(0) - the membrane proton channel. F(1) has five subunits: alpha(3), beta(3), gamma(1), delta(1), epsilon(1). F(0) has three main subunits: a(1), b(2) and c(10-14). The alpha and beta chains form an alternating ring which encloses part of the gamma chain. F(1) is attached to F(0) by a central stalk formed by the gamma and epsilon chains, while a peripheral stalk is formed by the delta and b chains.

Its subcellular location is the cell membrane. Functionally, f(1)F(0) ATP synthase produces ATP from ADP in the presence of a proton or sodium gradient. F-type ATPases consist of two structural domains, F(1) containing the extramembraneous catalytic core and F(0) containing the membrane proton channel, linked together by a central stalk and a peripheral stalk. During catalysis, ATP synthesis in the catalytic domain of F(1) is coupled via a rotary mechanism of the central stalk subunits to proton translocation. In terms of biological role, this protein is part of the stalk that links CF(0) to CF(1). It either transmits conformational changes from CF(0) to CF(1) or is implicated in proton conduction. In Alkaliphilus metalliredigens (strain QYMF), this protein is ATP synthase subunit delta.